The sequence spans 272 residues: Cerberus (272 aa).

The N-terminal stretch at 1 to 17 (MHLLLVQLLVLLPLGKA) is a signal peptide. 4 disulfide bridges follow: Cys-162–Cys-209, Cys-176–Cys-223, Cys-186–Cys-239, and Cys-190–Cys-241. In terms of domain architecture, CTCK spans 162–246 (CRTVPFNQTI…EECQCMVKTE (85 aa)). Residues Asn-168 and Asn-222 are each glycosylated (N-linked (GlcNAc...) asparagine).

This sequence belongs to the DAN family. As to quaternary structure, forms monomers and predominantly dimers. In terms of processing, N-glycosylated.

It localises to the secreted. Its function is as follows. Cytokine that may play a role in anterior neural induction and somite formation during embryogenesis in part, through a BMP-inhibitory mechanism. Can regulate Nodal signaling during gastrulation as well as the formation and patterning of the primitive streak. In Mus musculus (Mouse), this protein is Cerberus (Cer1).